The following is a 408-amino-acid chain: Phosphoglycerate kinase (408 aa).

Residues D22–N24, R39, H60–R63, R117, and R157 contribute to the substrate site. ATP is bound by residues E332 and G358 to T361.

The protein belongs to the phosphoglycerate kinase family. In terms of assembly, monomer.

It localises to the cytoplasm. It catalyses the reaction (2R)-3-phosphoglycerate + ATP = (2R)-3-phospho-glyceroyl phosphate + ADP. It functions in the pathway carbohydrate degradation; glycolysis; pyruvate from D-glyceraldehyde 3-phosphate: step 2/5. In Thermoplasma volcanium (strain ATCC 51530 / DSM 4299 / JCM 9571 / NBRC 15438 / GSS1), this protein is Phosphoglycerate kinase.